The sequence spans 140 residues: MMSLLPLLLIGIVLPATQAKDYGKCELNQILRERGVDKVISLPELICTMFHSSGFSTETEVDNNNHKEYGIFQISSNGWCAEKQEDVERSVCGILCSKLLDDDITDDIVCAKKILQLPERLDHWKAHNTFCRENLDQWNC.

Positions 1-19 (MMSLLPLLLIGIVLPATQA) are cleaved as a signal peptide. The 121-residue stretch at 20-140 (KDYGKCELNQ…CRENLDQWNC (121 aa)) folds into the C-type lysozyme domain. 4 disulfides stabilise this stretch: C25–C140, C47–C131, C80–C96, and C92–C110. K98, D101, D103, D106, and D107 together coordinate Ca(2+).

Lactose synthase (LS) is a heterodimer of a catalytic component, beta1,4-galactosyltransferase (beta4Gal-T1) and a regulatory component, alpha-lactalbumin (LA). As to expression, mammary gland specific. Secreted in milk.

Its subcellular location is the secreted. Regulatory subunit of lactose synthase, changes the substrate specificity of galactosyltransferase in the mammary gland making glucose a good acceptor substrate for this enzyme. This enables LS to synthesize lactose, the major carbohydrate component of milk. In other tissues, galactosyltransferase transfers galactose onto the N-acetylglucosamine of the oligosaccharide chains in glycoproteins. The polypeptide is Alpha-lactalbumin (LALBA) (Trichosurus vulpecula (Brush-tailed possum)).